We begin with the raw amino-acid sequence, 688 residues long: Potassium-transporting ATPase ATP-binding subunit (688 aa).

The next 4 helical transmembrane spans lie at 35-55 (VMFV…AMLA), 62-82 (ALFT…ANFA), 219-239 (IALT…CVTL), and 260-280 (VLIA…LSAI). Aspartate 313 acts as the 4-aspartylphosphate intermediate in catalysis. ATP contacts are provided by residues aspartate 350, glutamate 354, 383–390 (FSAMTRMS), and lysine 401. Mg(2+)-binding residues include aspartate 524 and aspartate 528. Transmembrane regions (helical) follow at residues 594-614 (FAII…LNIM), 622-642 (AVLS…PLAL), and 667-687 (GLIA…LLIL).

The protein belongs to the cation transport ATPase (P-type) (TC 3.A.3) family. Type IA subfamily. As to quaternary structure, the system is composed of three essential subunits: KdpA, KdpB and KdpC.

It localises to the cell inner membrane. The catalysed reaction is K(+)(out) + ATP + H2O = K(+)(in) + ADP + phosphate + H(+). Part of the high-affinity ATP-driven potassium transport (or Kdp) system, which catalyzes the hydrolysis of ATP coupled with the electrogenic transport of potassium into the cytoplasm. This subunit is responsible for energy coupling to the transport system and for the release of the potassium ions to the cytoplasm. The sequence is that of Potassium-transporting ATPase ATP-binding subunit from Photorhabdus laumondii subsp. laumondii (strain DSM 15139 / CIP 105565 / TT01) (Photorhabdus luminescens subsp. laumondii).